The primary structure comprises 518 residues: MEIKTRRDTSETSVRKDDEEEVEEEQPLSPAARVFHAPEFNCYVISVIGIKKKIDPDVIIEGLKQTLIRHPRFSSKMVSTSVGNKKRQTQSWVRTNVVVTDHVIVSDIQTQNIENGNADAFLETYVSNLTTVPLDISKPLWQLHLLDLKTSDAENVAVLKFHHSLGDGMSLMALVLACMRKTSNPDELPSLPNQNRSSSRSSRLMAGSRGDSRFLWLVMVIWSAIMLVLNTVCDALEFIATTMFLKDTETPIKGDFRFSKSKRMCLVHRTVSLDDIKLIKNTMKMTVNDVVLGVSQAGLSQYLDRRYGEKKKKVGEDQDSKRKATDMPKRIRLRSALLVNLRPNTGIQDLADMMAKGSTCRWGNWIGYIVFPFSIGLRDDPLQHLRRAKRIIDRKKNSLEAALTFVAGKFILKTFGVQVAAKIINRALSNTTMSFSNLIGPIEEISFYGHPITYMAPSVYGHPHALTMHFQSYMNQMTISLTVDPTVISDPHRLLDDWEKSLQSIKAAVQERDSRSLD.

Residues 1–17 (MEIKTRRDTSETSVRKD) are compositionally biased toward basic and acidic residues. Residues 1 to 29 (MEIKTRRDTSETSVRKDDEEEVEEEQPLS) form a disordered region. The Cytoplasmic segment spans residues 1–213 (MEIKTRRDTS…LMAGSRGDSR (213 aa)). H163 (proton acceptor) is an active-site residue. A disordered region spans residues 185–205 (PDELPSLPNQNRSSSRSSRLM). The helical transmembrane segment at 214–234 (FLWLVMVIWSAIMLVLNTVCD) threads the bilayer. Topologically, residues 235–518 (ALEFIATTMF…VQERDSRSLD (284 aa)) are lumenal. N-linked (GlcNAc...) asparagine glycosylation occurs at N430.

It in the N-terminal section; belongs to the long-chain O-acyltransferase family. As to expression, expressed in roots, stems, leaves, flowers and siliques.

The protein resides in the cell membrane. It localises to the endoplasmic reticulum membrane. It is found in the golgi apparatus membrane. The catalysed reaction is an acyl-CoA + a 1,2-diacyl-sn-glycerol = a triacyl-sn-glycerol + CoA. It catalyses the reaction a long chain fatty alcohol + a fatty acyl-CoA = a wax ester + CoA. Its pathway is glycerolipid metabolism; triacylglycerol biosynthesis. The protein operates within lipid metabolism. In terms of biological role, bifunctional wax ester synthase/diacylglycerol acyltransferase that uses acyl-CoAs with 16, 18 and 20 carbons as substrates, preferably in combination with 16:0ol alcohol. Involved in cuticular wax biosynthesis. The sequence is that of Wax ester synthase/diacylglycerol acyltransferase 6 from Arabidopsis thaliana (Mouse-ear cress).